The sequence spans 287 residues: Small ribosomal subunit biogenesis GTPase RsgA (287 aa).

The region spanning 61–218 is the CP-type G domain; it reads SSELIRPTVA…LVDTPGFTTL (158 aa). GTP contacts are provided by residues 110 to 113 and 161 to 169; these read NKED and GPSGAGKST. Zn(2+) contacts are provided by Cys242, Cys247, His249, and Cys255.

The protein belongs to the TRAFAC class YlqF/YawG GTPase family. RsgA subfamily. Monomer. Associates with 30S ribosomal subunit, binds 16S rRNA. The cofactor is Zn(2+).

The protein localises to the cytoplasm. Its function is as follows. One of several proteins that assist in the late maturation steps of the functional core of the 30S ribosomal subunit. Helps release RbfA from mature subunits. May play a role in the assembly of ribosomal proteins into the subunit. Circularly permuted GTPase that catalyzes slow GTP hydrolysis, GTPase activity is stimulated by the 30S ribosomal subunit. The polypeptide is Small ribosomal subunit biogenesis GTPase RsgA (Clostridium perfringens (strain 13 / Type A)).